A 249-amino-acid chain; its full sequence is MSNDSSECSQKLPKLKRILLKLSGESLSADQGFGINVESAQPIINQIKTLTNFGVELALVVGGGNILRGGRANFGNKIRRATADSMGMIATMINALALRDMLISEGVDAEVFSAKGVDGLLKVASAHEFNQELAKGRVLIFAGGTGNPFVTTDTTASLRAVEIGADALLKATTVNGVYDKDPNKYSDAKRFDKVTFSEVVSKELNVMDLGAFTQCRDFSIPIYVFDLTQPNALVDAVLDSKYGTWVTLD.

Residue 21 to 24 (KLSG) coordinates ATP. Gly63 contributes to the UMP binding site. 2 residues coordinate ATP: Gly64 and Arg68. UMP is bound by residues Asp84 and 145–152 (TGNPFVTT). Residues Thr172, Tyr178, and Asp181 each contribute to the ATP site.

It belongs to the UMP kinase family. As to quaternary structure, homohexamer.

It is found in the cytoplasm. The enzyme catalyses UMP + ATP = UDP + ADP. It participates in pyrimidine metabolism; CTP biosynthesis via de novo pathway; UDP from UMP (UMPK route): step 1/1. Its activity is regulated as follows. Inhibited by UTP. Its function is as follows. Catalyzes the reversible phosphorylation of UMP to UDP. The protein is Uridylate kinase of Francisella tularensis subsp. holarctica (strain FTNF002-00 / FTA).